We begin with the raw amino-acid sequence, 88 residues long: Large ribosomal subunit protein bL27 (88 aa).

A disordered region spans residues 1–21 (MAHKKGASSSRNGRDSNAQRL). Residues 7-19 (ASSSRNGRDSNAQ) show a composition bias toward polar residues.

Belongs to the bacterial ribosomal protein bL27 family.

This Frankia casuarinae (strain DSM 45818 / CECT 9043 / HFP020203 / CcI3) protein is Large ribosomal subunit protein bL27.